The sequence spans 128 residues: Large ribosomal subunit protein uL24 (128 aa).

The protein belongs to the universal ribosomal protein uL24 family. Part of the 50S ribosomal subunit.

One of two assembly initiator proteins, it binds directly to the 5'-end of the 23S rRNA, where it nucleates assembly of the 50S subunit. Its function is as follows. Located at the polypeptide exit tunnel on the outside of the subunit. The chain is Large ribosomal subunit protein uL24 from Pyrobaculum calidifontis (strain DSM 21063 / JCM 11548 / VA1).